A 131-amino-acid chain; its full sequence is MPSFKSTTQLQNTQLRGAQAEDRALAHLRRQGLEPVVRNYRCKGGEIDLVMRAPDGTLVFVEVRQRSGRGFGGAAASVTPAKQRRVLLAAAHYLATLAQVPPCRFDVVALEPGRLDWLQHAFDQDAAGAGS.

It belongs to the UPF0102 family.

In Cupriavidus necator (strain ATCC 17699 / DSM 428 / KCTC 22496 / NCIMB 10442 / H16 / Stanier 337) (Ralstonia eutropha), this protein is UPF0102 protein H16_A3579.